Reading from the N-terminus, the 427-residue chain is Trigger factor (427 aa).

One can recognise a PPIase FKBP-type domain in the interval Gly163 to Pro248.

The protein belongs to the FKBP-type PPIase family. Tig subfamily.

It localises to the cytoplasm. The enzyme catalyses [protein]-peptidylproline (omega=180) = [protein]-peptidylproline (omega=0). Its function is as follows. Involved in protein export. Acts as a chaperone by maintaining the newly synthesized protein in an open conformation. Functions as a peptidyl-prolyl cis-trans isomerase. In Streptococcus agalactiae serotype V (strain ATCC BAA-611 / 2603 V/R), this protein is Trigger factor.